The following is a 38-amino-acid chain: Mu-agatoxin-Hc1c (38 aa).

4 cysteine pairs are disulfide-bonded: Cys-3–Cys-19, Cys-10–Cys-24, Cys-18–Cys-34, and Cys-26–Cys-32. Position 38 is a serine amide (Ser-38).

The protein belongs to the neurotoxin 07 (Beta/delta-agtx) family. 02 (aga-3) subfamily. As to expression, expressed by the venom gland.

It localises to the secreted. Its function is as follows. Insecticidal neurotoxin that induces irreversible neuromuscular blockade in house crickets (A.domesticus). Modifies presynaptic voltage-gated sodium channels (Nav), causing them to open at the normal resting potential of the nerve. This leads to spontaneous release of neurotransmitter and repetitive action potentials in motor neurons. This is Mu-agatoxin-Hc1c from Hololena curta (Funnel-web spider).